Consider the following 395-residue polypeptide: tRNA-specific 2-thiouridylase MnmA (395 aa).

ATP contacts are provided by residues 6 to 13 and Leu32; that span reads AMSGGVDS. Residue Cys101 is the Nucleophile of the active site. A disulfide bond links Cys101 and Cys193. Gly125 is a binding site for ATP. Residues 143-145 are interaction with tRNA; sequence KDQ. The Cysteine persulfide intermediate role is filled by Cys193.

This sequence belongs to the MnmA/TRMU family.

Its subcellular location is the cytoplasm. It catalyses the reaction S-sulfanyl-L-cysteinyl-[protein] + uridine(34) in tRNA + AH2 + ATP = 2-thiouridine(34) in tRNA + L-cysteinyl-[protein] + A + AMP + diphosphate + H(+). Functionally, catalyzes the 2-thiolation of uridine at the wobble position (U34) of tRNA, leading to the formation of s(2)U34. The protein is tRNA-specific 2-thiouridylase MnmA of Corynebacterium jeikeium (strain K411).